A 291-amino-acid chain; its full sequence is ATP synthase gamma chain (291 aa).

The protein belongs to the ATPase gamma chain family. F-type ATPases have 2 components, CF(1) - the catalytic core - and CF(0) - the membrane proton channel. CF(1) has five subunits: alpha(3), beta(3), gamma(1), delta(1), epsilon(1). CF(0) has three main subunits: a, b and c.

The protein localises to the cell inner membrane. Functionally, produces ATP from ADP in the presence of a proton gradient across the membrane. The gamma chain is believed to be important in regulating ATPase activity and the flow of protons through the CF(0) complex. The polypeptide is ATP synthase gamma chain (Nitratidesulfovibrio vulgaris (strain ATCC 29579 / DSM 644 / CCUG 34227 / NCIMB 8303 / VKM B-1760 / Hildenborough) (Desulfovibrio vulgaris)).